We begin with the raw amino-acid sequence, 174 residues long: MKTFLPGLMSASRKLSAWIGLYALLVLLALYLASCSAASHAPLKQSASDPAHSHRMTLSDHEFAPVDFEPQPGDTITIRNRSDISHSIYVTYPDGTMVNLGVQTPGTTVHWQVPADAKGEFVLQCWIHPIIRANLLVNAANLSSSAFKSALPKFTRQEILDGRQNICSSRNRRA.

It participates in one-carbon metabolism; methylamine degradation. Functionally, probably involved in TTQ prosthetic group biosynthesis. In Methylophilus methylotrophus (Bacterium W3A1), this protein is Methylamine utilization protein MauL (mauL).